Consider the following 660-residue polypeptide: Polycomb protein SCMH1 (660 aa).

MBT repeat units lie at residues 28–126 (FTWD…LQPP) and 134–235 (SSWP…LQPP). The tract at residues 233–345 (QPPGTKVVIP…EPDTSTVPQD (113 aa)) is disordered. Composition is skewed to basic residues over residues 273–284 (RGRKPGKKRGRT) and 305–320 (FPKK…RKPR). A compositionally biased stretch (low complexity) spans 330–343 (PTTSTPEPDTSTVP). In terms of domain architecture, SAM spans 593-658 (WTVEDVMQFV…SYHIDRLKQG (66 aa)).

The protein belongs to the SCM family. As to quaternary structure, interacts with the SAM domain of PHC1 via its SAM domain in vitro. Associates with a PRC1-like complex. As to expression, strongly expressed in heart, muscle and pancreas. Weakly expressed in brain, placenta, lung, liver and kidney.

The protein localises to the nucleus. In terms of biological role, associates with Polycomb group (PcG) multiprotein complexes; the complex class is required to maintain the transcriptionally repressive state of some genes. In Homo sapiens (Human), this protein is Polycomb protein SCMH1.